The sequence spans 260 residues: MTSLKLLKEKAPLVICITNDVVKNFTANGLVALGASPAMSEFPADLEDLLKYAGGLLINIGTLTDENWKLYQAALKIAEKYNVPAVLDPVACGAGEYRKKVADDLINNYKLAAIRGNAGEIASLVGIDVASKGVDSAGVDNIDEIALAANEKFNIPIVVTGEVDAIAVNGEVVTIHNGSAMMPKVIGTGCLLGAVVASFIGLEKGQELKSLETAMLVYNIAGEMAEKRPNGHLPGTFKVEFINALYEITDEDVKEFKRVK.

Methionine 39 lines the substrate pocket. ATP is bound by residues arginine 115 and threonine 160. Residue glycine 187 coordinates substrate.

The protein belongs to the Thz kinase family. The cofactor is Mg(2+).

It carries out the reaction 5-(2-hydroxyethyl)-4-methylthiazole + ATP = 4-methyl-5-(2-phosphooxyethyl)-thiazole + ADP + H(+). The protein operates within cofactor biosynthesis; thiamine diphosphate biosynthesis; 4-methyl-5-(2-phosphoethyl)-thiazole from 5-(2-hydroxyethyl)-4-methylthiazole: step 1/1. Its function is as follows. Catalyzes the phosphorylation of the hydroxyl group of 4-methyl-5-beta-hydroxyethylthiazole (THZ). This is Hydroxyethylthiazole kinase 1 from Streptococcus pneumoniae serotype 2 (strain D39 / NCTC 7466).